Consider the following 136-residue polypeptide: Histone H3.1/H3.2 (136 aa).

Residues 1–42 (MARTKQTARKSTGGKAPRKQLASKAARKAAPATGGVKKPHRY) are disordered. N6,N6,N6-trimethyllysine; alternate is present on K5. At K5 the chain carries N6,N6-dimethyllysine; alternate. N6-methyllysine; alternate occurs at positions 5 and 10. At K10 the chain carries N6-acetyllysine; alternate. S11 carries the phosphoserine modification. Position 15 is an N6,N6-dimethyllysine; alternate (K15). N6-acetyllysine; alternate is present on residues K15, K19, K24, K28, and K37. An N6-methyllysine; alternate mark is found at K19, K24, K28, and K37. Positions 19-32 (KQLASKAARKAAPA) are enriched in low complexity. N6,N6,N6-trimethyllysine; alternate occurs at positions 28 and 37. K28 and K37 each carry N6,N6-dimethyllysine; alternate. N6-acetyllysine is present on residues K57 and K65. At K80 the chain carries N6,N6,N6-trimethyllysine; alternate. The residue at position 80 (K80) is an N6,N6-dimethyllysine; alternate. Residue K80 is modified to N6-methyllysine; alternate.

It belongs to the histone H3 family. In terms of assembly, the nucleosome is a histone octamer containing two molecules each of H2A, H2B, H3 and H4 assembled in one H3-H4 heterotetramer and two H2A-H2B heterodimers. The octamer wraps approximately 147 bp of DNA. Phosphorylated by ark1 to form H3S10ph in a cell cycle-dependent manner during mitosis and meiosis. H3S10ph is also formed by ssp2, promotes subsequent H3K14ac formation by gcn5, and is required for transcriptional activation through TBP recruitment to the promoters. Dephosphorylation is performed by sds21. Post-translationally, mono-, di- and trimethylated by the COMPASS complex to form H3K4me1/2/3. H3K4me activates gene expression by regulating transcription elongation and plays a role in telomere length maintenance. H3K4me enrichment correlates with transcription levels, and occurs in a 5' to 3' gradient with H3K4me3 enrichment at the 5'-end of genes, shifting to H3K4me2 and then H3K4me1. Methylated by clr4 to form H3K9me1. H3K9me1 represents a specific tag for epigenetic transcriptional repression by recruiting swi6/HP1 to methylated histones. Targeting to histone probably involves clr3 and rik1. Essential for silencing of centromeres and directional switching of the mating type. Methylated by set2 to form H3K36me. H3K36me represses gene expression. Methylated by dot1 to form H3K79me. H3K79me is required for association of SIR proteins with telomeric regions and for telomeric silencing. The COMPASS-mediated formation of H3K4me2/3 and the dot1-mediated formation of H3K79me require H2BK123ub1. In terms of processing, acetylation of histone H3 leads to transcriptional activation. H3K14ac formation by gcn5 is promoted by H3S10ph. H3K14ac can also be formed by esa1. H3K56ac formation occurs predominantly in newly synthesized H3 molecules during G1, S and G2/M of the cell cycle and may be involved in DNA repair.

The protein localises to the nucleus. It localises to the chromosome. Functionally, core component of nucleosome. Nucleosomes wrap and compact DNA into chromatin, limiting DNA accessibility to the cellular machineries which require DNA as a template. Histones thereby play a central role in transcription regulation, DNA repair, DNA replication and chromosomal stability. DNA accessibility is regulated via a complex set of post-translational modifications of histones, also called histone code, and nucleosome remodeling. The protein is Histone H3.1/H3.2 (hht1) of Schizosaccharomyces pombe (strain 972 / ATCC 24843) (Fission yeast).